Reading from the N-terminus, the 199-residue chain is A-type ATP synthase subunit E (199 aa).

The protein belongs to the V-ATPase E subunit family. In terms of assembly, has multiple subunits with at least A(3), B(3), C, D, E, F, H, I and proteolipid K(x).

It is found in the cell membrane. Functionally, component of the A-type ATP synthase that produces ATP from ADP in the presence of a proton gradient across the membrane. This Pyrococcus abyssi (strain GE5 / Orsay) protein is A-type ATP synthase subunit E.